Here is a 249-residue protein sequence, read N- to C-terminus: Probable septum site-determining protein MinC (249 aa).

The tract at residues 116 to 149 (AAVSPPPPPPPPPARAEPAAPVARPAPGRMQRNA) is disordered. Positions 119–130 (SPPPPPPPPPAR) are enriched in pro residues. A compositionally biased stretch (low complexity) spans 131-142 (AEPAAPVARPAP).

Belongs to the MinC family. As to quaternary structure, interacts with MinD and FtsZ.

In terms of biological role, cell division inhibitor that blocks the formation of polar Z ring septums. Rapidly oscillates between the poles of the cell to destabilize FtsZ filaments that have formed before they mature into polar Z rings. Prevents FtsZ polymerization. This is Probable septum site-determining protein MinC from Xanthomonas campestris pv. campestris (strain ATCC 33913 / DSM 3586 / NCPPB 528 / LMG 568 / P 25).